We begin with the raw amino-acid sequence, 856 residues long: Valine--tRNA ligase (856 aa).

The 'HIGH' region motif lies at 47–57 (PTASGVLHIGH). A 'KMSKS' region motif is present at residues 578–582 (KMSKS). ATP is bound at residue lysine 581.

Belongs to the class-I aminoacyl-tRNA synthetase family. ValS type 2 subfamily. In terms of assembly, monomer.

The protein resides in the cytoplasm. The enzyme catalyses tRNA(Val) + L-valine + ATP = L-valyl-tRNA(Val) + AMP + diphosphate. In terms of biological role, catalyzes the attachment of valine to tRNA(Val). As ValRS can inadvertently accommodate and process structurally similar amino acids such as threonine, to avoid such errors, it has a 'posttransfer' editing activity that hydrolyzes mischarged Thr-tRNA(Val) in a tRNA-dependent manner. In Tropheryma whipplei (strain TW08/27) (Whipple's bacillus), this protein is Valine--tRNA ligase.